The following is a 209-amino-acid chain: Ras-like protein (209 aa).

10–17 is a GTP binding site; that stretch reads GGGLVGKS. The short motif at 55–63 is the Effector region element; that stretch reads YDPTVEDSR. The residue at position 58 (threonine 58) is a Phosphothreonine. GTP-binding positions include 79–83 and 140–143; these read DTAGQ and NKAD. Position 206 is a cysteine methyl ester (cysteine 206). Cysteine 206 carries S-geranylgeranyl cysteine lipidation. Positions 207-209 are cleaved as a propeptide — removed in mature form; sequence LII.

It belongs to the small GTPase superfamily. Ras family. Phosphorylated in the presence of insulin.

The protein resides in the cell membrane. The catalysed reaction is GTP + H2O = GDP + phosphate + H(+). Its activity is regulated as follows. Alternates between an inactive form bound to GDP and an active form bound to GTP. Activated by a guanine nucleotide-exchange factor (GEF) and inactivated by a GTPase-activating protein (GAP). Its function is as follows. This protein is activated by the insulin/insulin (insulin-like)-receptor system. This transition enables the ras protein to interact with the lectin-receptor/lectin complex, a process which ultimately lead to an initiation of an intra-cellular signal-transduction chain. This chain is Ras-like protein, found in Geodia cydonium (Sponge).